A 132-amino-acid polypeptide reads, in one-letter code: Methylglyoxal synthase (132 aa).

One can recognise an MGS-like domain in the interval 1-132; it reads MNIALIAHDQ…LLEWREIEDK (132 aa). Residues histidine 8 and lysine 12 each contribute to the substrate site. Catalysis depends on aspartate 60, which acts as the Proton donor/acceptor. Residue histidine 87 coordinates substrate.

It belongs to the methylglyoxal synthase family.

The catalysed reaction is dihydroxyacetone phosphate = methylglyoxal + phosphate. Catalyzes the formation of methylglyoxal from dihydroxyacetone phosphate. This is Methylglyoxal synthase from Thermoanaerobacter pseudethanolicus (strain ATCC 33223 / 39E) (Clostridium thermohydrosulfuricum).